We begin with the raw amino-acid sequence, 977 residues long: Dynamin-like GTPase OPA1, mitochondrial (977 aa).

A mitochondrion-targeting transit peptide spans 1–86; sequence MWRTKAAAAC…VKYGYQSYRN (86 aa). The Mitochondrial matrix segment spans residues 87–95; the sequence is FWLARLASR. The helical transmembrane segment at 96–112 threads the bilayer; that stretch reads LLKIRYLILGSAVGGGY. Residues 113–787 are Mitochondrial intermembrane-facing; it reads TAKKTYDQWE…SVIEDMVGPD (675 aa). Residues 224–271 adopt a coiled-coil conformation; it reads KKVSDKEKIDQLQEELLRTQLKYQRMLERLEKENKELRKLVLQRDDKG. The Dynamin-type G domain occupies 302–578; sequence QDHLPRVVVV…FWKMVRESVE (277 aa). Residues 312 to 319 are G1 motif; the sequence is GDQSAGKT. GTP contacts are provided by S315, G317, K318, T319, S320, and G334. T319 serves as a coordination point for Mg(2+). The segment at 338-341 is G2 motif; it reads MMTR. Residues T340 and D415 each contribute to the Mg(2+) site. Residues 415 to 418 form a G3 motif region; the sequence is DLPG. The segment at 484–487 is G4 motif; the sequence is TKVD. Residues K485, D487, and T520 each contribute to the GTP site. Residues 518–521 form a G5 motif region; the sequence is VVTG. Stalk region stretches follow at residues 606–853 and 891–945; these read DRNE…IKDT and CNDI…VKLL. Residues 753–873 form a paddle region region; sequence SDKQQWDAAI…KTALNHCNLC (121 aa). Residues 788-798 lie within the membrane without spanning it; sequence WKKRWLYWISR. Topologically, residues 799–977 are mitochondrial intermembrane; the sequence is TKEQNIRNET…AFIEALHQEK (179 aa). The cysteines at positions 873 and 891 are disulfide-linked. Residues 911 to 977 are a coiled coil; sequence LRQQLTNTEV…AFIEALHQEK (67 aa).

It belongs to the TRAFAC class dynamin-like GTPase superfamily. Dynamin/Fzo/YdjA family. Oligomeric complex consisting of membrane-bound and soluble forms of OPA1. In terms of processing, cleaved by OMA1 or YME1L downstream of the transmembrane region in response to different signals to generate soluble forms. Cleaved by OMA1 at position S1 following stress conditions, generating the short soluble form (Dynamin-like GTPase OPA1, short form; S-OPA1).

It is found in the mitochondrion inner membrane. Its subcellular location is the mitochondrion intermembrane space. It carries out the reaction GTP + H2O = GDP + phosphate + H(+). Functionally, dynamin-related GTPase that is essential for normal mitochondrial morphology by mediating fusion of the mitochondrial inner membranes, regulating cristae morphology and maintaining respiratory chain function. Exists in two forms: the transmembrane, long form (Dynamin-like GTPase OPA1, long form; L-OPA1), which is tethered to the inner mitochondrial membrane, and the short soluble form (Dynamin-like GTPase OPA1, short form; S-OPA1), which results from proteolytic cleavage and localizes in the intermembrane space. Both forms (L-OPA1 and S-OPA1) cooperate to catalyze the fusion of the mitochondrial inner membrane. The equilibrium between L-OPA1 and S-OPA1 is essential: excess levels of S-OPA1, produced by cleavage by OMA1 following loss of mitochondrial membrane potential, lead to an impaired equilibrium between L-OPA1 and S-OPA1, inhibiting mitochondrial fusion. The balance between L-OPA1 and S-OPA1 also influences cristae shape and morphology. Its role in mitochondrial morphology is required for mitochondrial genome maintenance. In terms of biological role, constitutes the transmembrane long form (L-OPA1) that plays a central role in mitochondrial inner membrane fusion and cristae morphology. L-OPA1 and the soluble short form (S-OPA1) form higher-order helical assemblies that coordinate the fusion of mitochondrial inner membranes. Inner membrane-anchored L-OPA1 molecules initiate membrane remodeling by recruiting soluble S-OPA1 to rapidly polymerize into a flexible cylindrical scaffold encaging the mitochondrial inner membrane. Once at the membrane surface, the formation of S-OPA1 helices induce bilayer curvature. OPA1 dimerization through the paddle region, which inserts into cardiolipin-containing membrane, promotes GTP hydrolysis and the helical assembly of a flexible OPA1 lattice on the membrane, which drives membrane curvature and mitochondrial fusion. Plays a role in the maintenance and remodeling of mitochondrial cristae, some invaginations of the mitochondrial inner membrane that provide an increase in the surface area. Probably acts by forming helical filaments at the inside of inner membrane tubes with the shape and dimensions of crista junctions. Constitutes the soluble short form (S-OPA1) generated by cleavage by OMA1, which plays a central role in mitochondrial inner membrane fusion and cristae morphology. The transmembrane long form (L-OPA1) and the S-OPA1 form higher-order helical assemblies that coordinate the fusion of mitochondrial inner membranes. Inner membrane-anchored L-OPA1 molecules initiate membrane remodeling by recruiting soluble S-OPA1 to rapidly polymerize into a flexible cylindrical scaffold encaging the mitochondrial inner membrane. Once at the membrane surface, the formation of S-OPA1 helices induce bilayer curvature. OPA1 dimerization through the paddle region, which inserts into cardiolipin-containing membrane, promotes GTP hydrolysis and the helical assembly of a flexible OPA1 lattice on the membrane, which drives membrane curvature and mitochondrial fusion. Excess levels of S-OPA1 produced by cleavage by OMA1 following stress conditions that induce loss of mitochondrial membrane potential, lead to an impaired equilibrium between L-OPA1 and S-OPA1, thereby inhibiting mitochondrial fusion. Plays a role in the maintenance and remodeling of mitochondrial cristae, some invaginations of the mitochondrial inner membrane that provide an increase in the surface area. Probably acts by forming helical filaments at the inside of inner membrane tubes with the shape and dimensions of crista junctions. This Gallus gallus (Chicken) protein is Dynamin-like GTPase OPA1, mitochondrial.